The sequence spans 559 residues: Polypeptide N-acetylgalactosaminyltransferase 1 (559 aa).

Residues methionine 1–lysine 8 lie on the Cytoplasmic side of the membrane. The helical; Signal-anchor for type II membrane protein transmembrane segment at valine 9 to phenylalanine 28 threads the bilayer. At serine 29–phenylalanine 559 the chain is on the lumenal side. Asparagine 95 carries N-linked (GlcNAc...) asparagine glycosylation. Intrachain disulfides connect cysteine 106–cysteine 339, cysteine 330–cysteine 408, cysteine 442–cysteine 459, cysteine 482–cysteine 497, and cysteine 523–cysteine 540. A catalytic subdomain A region spans residues leucine 115 to arginine 225. Residues aspartate 156 and arginine 186 each coordinate substrate. Positions 209 and 211 each coordinate Mn(2+). The catalytic subdomain B stretch occupies residues proline 285–arginine 347. Substrate is bound at residue tryptophan 316. Histidine 344 lines the Mn(2+) pocket. Residues arginine 347 and tyrosine 352 each contribute to the substrate site. In terms of domain architecture, Ricin B-type lectin spans phenylalanine 429–arginine 551. Residue asparagine 552 is glycosylated (N-linked (GlcNAc...) asparagine).

Belongs to the glycosyltransferase 2 family. GalNAc-T subfamily. The cofactor is Mn(2+). In terms of tissue distribution, heart, brain, spleen, liver, skeletal muscle and kidney.

The protein resides in the golgi apparatus. It localises to the golgi stack membrane. Its subcellular location is the secreted. It catalyses the reaction L-seryl-[protein] + UDP-N-acetyl-alpha-D-galactosamine = a 3-O-[N-acetyl-alpha-D-galactosaminyl]-L-seryl-[protein] + UDP + H(+). It carries out the reaction L-threonyl-[protein] + UDP-N-acetyl-alpha-D-galactosamine = a 3-O-[N-acetyl-alpha-D-galactosaminyl]-L-threonyl-[protein] + UDP + H(+). The protein operates within protein modification; protein glycosylation. Catalyzes the initial reaction in O-linked oligosaccharide biosynthesis, the transfer of an N-acetyl-D-galactosamine residue to a serine or threonine residue on the protein receptor. Has a broad spectrum of substrates such as apomucin-, MUC5AC-, MUC1- and MUC2-derived peptides. This is Polypeptide N-acetylgalactosaminyltransferase 1 from Rattus norvegicus (Rat).